Reading from the N-terminus, the 137-residue chain is uncharacterized protein (137 aa).

This is an uncharacterized protein from Bacillus subtilis (strain 168).